A 304-amino-acid chain; its full sequence is E3 ubiquitin-protein ligase CHIP (304 aa).

A compositionally biased stretch (basic and acidic residues) spans 1 to 10 (MKGKEEKEGG). The segment at 1–30 (MKGKEEKEGGARLGTGGGGSPDKSPSAQEL) is disordered. Lys-2 is covalently cross-linked (Glycyl lysine isopeptide (Lys-Gly) (interchain with G-Cter in ubiquitin)). Residues 11–20 (ARLGTGGGGS) show a composition bias toward gly residues. Position 20 is a phosphoserine (Ser-20). A Glycyl lysine isopeptide (Lys-Gly) (interchain with G-Cter in ubiquitin) cross-link involves residue Lys-23. Residues Ser-24 and Ser-26 each carry the phosphoserine modification. 3 TPR repeats span residues 27–60 (AQEL…NPLV), 61–94 (AVYY…DGQS), and 96–128 (KAHF…AKEQ). The required for interaction with MAPK7 stretch occupies residues 102-201 (GQCQLEMESY…GHIRAQQACI (100 aa)). The tract at residues 143 to 197 (AKKKRWNSIEERRIHQESELHSYLTRLIAAERERELEECQRNHEGHEDDGHIRAQ) is required for interaction with and ubiquitination of MYOCD. A required for interaction with FOXO1 region spans residues 144–198 (KKKRWNSIEERRIHQESELHSYLTRLIAAERERELEECQRNHEGHEDDGHIRAQQ). Residues 144 to 304 (KKKRWNSIEE…ISENGWVEDY (161 aa)) form a required for ubiquitination of FOXO1 region. Position 150 is a phosphoserine (Ser-150). Glycyl lysine isopeptide (Lys-Gly) (interchain with G-Cter in ubiquitin) cross-links involve residues Lys-222 and Lys-256. Residues 227–301 (DIPDYLCGKI…DAFISENGWV (75 aa)) form the U-box domain. A Phosphoserine modification is found at Ser-274.

In terms of assembly, homodimer. Interacts with BAG2, and with the E2 ubiquitin conjugating enzymes UBE2D1, UBE2D2 and UBE2D3. Detected in a ternary complex containing STUB1, HSPA1A and HSPBP1. Part of a complex composed of STUB1/CHIP, VCP/p97, CHRNA3, and UBXN2A that modulates the ubiquitination and endoplasmic reticulum-associated degradation (ERAD) of CHRNA3. Within the complex UBXN2A acts as a scaffold protein required for the interaction of CHRNA3 with VCP/p97, this interaction also inhibits CHRNA3 ubiquitination by STUB1/CHIP and subsequently ERAD. Interacts with MKKS. Interacts with DNAAF4. Interacts (via the U-box domain) with the UBE2V2-UBE2N heterodimer; the complex has a specific 'Lys-63'-linked polyubiquitination activity. Interacts (when monoubiquitinated) with ATXN3. Interacts with UBE2W. Interacts with DNAJB6. Interacts with FLCN and HSP90AA1. Interacts with HSP90. Interacts with UBE2N and UBE2V1. Interacts (via TPR repeats) with HSPA8 (via C-terminus). Interacts (via TPR repeats) with HSPA1A (via C-terminus). Interacts with the non-acetylated form of HSPA1A and HSPA1B. Interacts with SMAD3 and HSP90AB1. Interacts with UBE4B. Interacts with PRMT5. Interacts with MYOCD (via C-terminus). Interacts with FOXO1 (when phosphorylated on 'Ser-253'). Interacts with MAPK7/ERK5; the interaction is enhanced in the presence of IGF1 or MAP2K5 and promotes STUB1/CHIP E3 ligase activity. Interacts with and ubiquitinates ESR1; the interaction is promoted in the absence of estradiol (17-beta-estradiol/E2). Interacts with ESR2. Interacts with and ubiquitinates NFATC3; HSPA1A/HSP70 is required as a co-chaperone. In macrophages, interacts with PAQR3; the interaction promotes PPARG poylubiquitination and STUB1-mediated degradation. Component of the chaperone-assisted selective autophagy (CASA) complex consisting of BAG3, HSPA8/HSC70, HSPB8 and STUB1/CHIP. In terms of processing, auto-ubiquitinated; mediated by UBE2D1 and UBE2D2 and enhanced in the presence of MAP2K5. Monoubiquitinated at Lys-2 following cell stress by UBE2W, promoting the interaction with ATXN3. Expressed in the brain.

The protein localises to the cytoplasm. The protein resides in the nucleus. Its subcellular location is the mitochondrion. The catalysed reaction is S-ubiquitinyl-[E2 ubiquitin-conjugating enzyme]-L-cysteine + [acceptor protein]-L-lysine = [E2 ubiquitin-conjugating enzyme]-L-cysteine + N(6)-ubiquitinyl-[acceptor protein]-L-lysine.. The protein operates within protein modification; protein ubiquitination. In terms of biological role, E3 ubiquitin-protein ligase which targets misfolded chaperone substrates towards proteasomal degradation. Plays a role in the maintenance of mitochondrial morphology and promotes mitophagic removal of dysfunctional mitochondria; thereby acts as a protector against apoptosis in response to cellular stress. Negatively regulates vascular smooth muscle contraction, via degradation of the transcriptional activator MYOCD and subsequent loss of transcription of genes involved in vascular smooth muscle contraction. Promotes survival and proliferation of cardiac smooth muscle cells via ubiquitination and degradation of FOXO1, resulting in subsequent repression of FOXO1-mediated transcription of pro-apoptotic genes. Ubiquitinates ICER-type isoforms of CREM and targets them for proteasomal degradation, thereby acts as a positive effector of MAPK/ERK-mediated inhibition of apoptosis in cardiomyocytes. Inhibits lipopolysaccharide-induced apoptosis and hypertrophy in cardiomyocytes, via ubiquitination and subsequent proteasomal degradation of NFATC3. Collaborates with ATXN3 in the degradation of misfolded chaperone substrates: ATXN3 restricting the length of ubiquitin chain attached to STUB1/CHIP substrates and preventing further chain extension. Ubiquitinates NOS1 in concert with Hsp70 and Hsp40. Modulates the activity of several chaperone complexes, including Hsp70, Hsc70 and Hsp90. Ubiquitinates CHRNA3 targeting it for endoplasmic reticulum-associated degradation in cortical neurons, as part of the STUB1-VCP-UBXN2A complex. Ubiquitinates and promotes ESR1 proteasomal degradation in response to age-related circulating estradiol (17-beta-estradiol/E2) decline, thereby promotes neuronal apoptosis in response to ischemic reperfusion injury. Mediates transfer of non-canonical short ubiquitin chains to HSPA8 that have no effect on HSPA8 degradation. Mediates polyubiquitination of DNA polymerase beta (POLB) at 'Lys-41', 'Lys-61' and 'Lys-81', thereby playing a role in base-excision repair: catalyzes polyubiquitination by amplifying the HUWE1/ARF-BP1-dependent monoubiquitination and leading to POLB-degradation by the proteasome. Mediates polyubiquitination of CYP3A4. Ubiquitinates EPHA2 and may regulate the receptor stability and activity through proteasomal degradation. Acts as a co-chaperone for HSPA1A and HSPA1B chaperone proteins and promotes ubiquitin-mediated protein degradation. Negatively regulates the suppressive function of regulatory T-cells (Treg) during inflammation by mediating the ubiquitination and degradation of FOXP3 in a HSPA1A/B-dependent manner. Catalyzes monoubiquitination of SIRT6, preventing its degradation by the proteasome. Likely mediates polyubiquitination and down-regulates plasma membrane expression of PD-L1/CD274, an immune inhibitory ligand critical for immune tolerance to self and antitumor immunity. Negatively regulates TGF-beta signaling by modulating the basal level of SMAD3 via ubiquitin-mediated degradation. Plays a role in the degradation of TP53. Mediates ubiquitination of RIPK3 leading to its subsequent proteasome-dependent degradation. May regulate myosin assembly in striated muscles together with UBE4B and VCP/p97 by targeting myosin chaperone UNC45B for proteasomal degradation. Ubiquitinates PPARG in macrophages playing a role in M2 macrophages polarization and angiogenesis. This Mus musculus (Mouse) protein is E3 ubiquitin-protein ligase CHIP.